Consider the following 493-residue polypeptide: Tripartite motif-containing protein 5 (493 aa).

N-acetylalanine is present on Ala-2. Residues 15 to 59 form an RING-type zinc finger; that stretch reads CPICLELLTQPLSLDCGHSFCQACLTANHKKSTLDKGERSCPVCR. Phosphoserine is present on Ser-86. A B box-type zinc finger spans residues 90–132; that stretch reads QKVDHCARHGEKLLLFCKEDGKVICWLCERSQEHRGHHTFLTE. The Zn(2+) site is built by Cys-95, His-98, Cys-117, and His-123. A coiled-coil region spans residues 131–223; the sequence is TEEVAQKYQV…LTKSETEMVQ (93 aa). A required for interaction with GABARAP and for autophagy region spans residues 185–198; the sequence is FEQLRDILDWEESN. The 213-residue stretch at 281-493 folds into the B30.2/SPRY domain; that stretch reads LKGMLEVFRE…VPMTLCSPSS (213 aa).

It belongs to the TRIM/RBCC family. As to quaternary structure, can form homodimers and homotrimers. In addition to lower-order dimerization, also exhibits a higher-order multimerization and both low- and high-order multimerizations are essential for its restriction activity. Interacts with BTBD1 and BTBD2. Interacts with PSMC4, PSMC5, PSMD7 and HSPA8/HSC70. Interacts (via B30.2/SPRY domain) with HSPA1A/B. Interacts with PSMC2, MAP3K7/TAK1, TAB2 and TAB3. Interacts with SQSTM1. Interacts with TRIM6 and TRIM34. Interacts with ULK1 (phosphorylated form), GABARAP, GABARAPL1, GABARAPL2, MAP1LC3A, MAP1LC3C and BECN1. In terms of processing, degraded in a proteasome-independent fashion in the absence of viral infection but in a proteasome-dependent fashion following exposure to restriction sensitive virus. Post-translationally, autoubiquitinated in a RING finger- and UBE2D2-dependent manner. Monoubiquitinated by TRIM21. Deubiquitinated by Yersinia YopJ. Ubiquitination may not lead to proteasomal degradation.

The protein resides in the cytoplasm. The protein localises to the nucleus. The catalysed reaction is S-ubiquitinyl-[E2 ubiquitin-conjugating enzyme]-L-cysteine + [acceptor protein]-L-lysine = [E2 ubiquitin-conjugating enzyme]-L-cysteine + N(6)-ubiquitinyl-[acceptor protein]-L-lysine.. Its pathway is protein modification; protein ubiquitination. Functionally, capsid-specific restriction factor that prevents infection from non-host-adapted retroviruses. Blocks viral replication early in the life cycle, after viral entry but before reverse transcription. In addition to acting as a capsid-specific restriction factor, also acts as a pattern recognition receptor that activates innate immune signaling in response to the retroviral capsid lattice. Binding to the viral capsid triggers its E3 ubiquitin ligase activity, and in concert with the heterodimeric ubiquitin conjugating enzyme complex UBE2V1-UBE2N (also known as UBC13-UEV1A complex) generates 'Lys-63'-linked polyubiquitin chains, which in turn are catalysts in the autophosphorylation of the MAP3K7/TAK1 complex (includes TAK1, TAB2, and TAB3). Activation of the MAP3K7/TAK1 complex by autophosphorylation results in the induction and expression of NF-kappa-B and MAPK-responsive inflammatory genes, thereby leading to an innate immune response in the infected cell. Plays a role in regulating autophagy through activation of autophagy regulator BECN1 by causing its dissociation from its inhibitors BCL2 and TAB2. In Pongo abelii (Sumatran orangutan), this protein is Tripartite motif-containing protein 5 (TRIM5).